A 38-amino-acid chain; its full sequence is MLSIFETVAAAAPVTVAETQQASNNENRGQPGYYCLIA.

Residue C35 is modified to Cysteine methyl ester. C35 is lipidated: S-farnesyl cysteine. Positions L36–A38 are cleaved as a propeptide — removed in mature form.

Its subcellular location is the cell membrane. Its function is as follows. Mating pheromone for A2 allele. This Mycosarcoma maydis (Corn smut fungus) protein is A2-specific pheromone (MFA2).